We begin with the raw amino-acid sequence, 1184 residues long: MKKYRKISIGCFAMATQTSHVFHGQENMFLENHCIRRNTGRDSKKPLKQKNMNGLGQNSDNGLLVTHVNQTQDLLRLQGSETQSSDWEDSEDWLSAHSLKCQKLTLADLISQGTEVLEEGTNVVQKICFSTQIIRHFESKLSDTIEVYQERIQWLTENSKKAFGLIKGARVSILIDVSAISSGPQKEEFQKDLMSLIDEQLSHKEKLFVLSFGTNAGSLWPDPMEVSASTLQELKLWVKTLQPDGGSNLLQALKKIFTLKGLDSLVAIMRSCPDQPSEILSDYIQQSTMGRDLIIHFITYRCDDQMPPAVLKNLAEAVRGYYHCYSPKMEHYTSRDMDELLAEIQKAQSLLSHVQALQHSSPCEALTCTMEEISTEITNGPLISLLPKPPKHDAPLTIEFPNLDKTSAEWLKVNGLKAKKLSLYQVLAPNAFSPVEEFVPILQKTVSSTIHEKAMIQFEWHDGTVKNIHVDPPFLYKYQQQLSRAMRMYERRIEWLSLASRRIWGTVCEKRVVVLLDISATNSMYIIHIQHSLRLLLEEQLSNKDCFNLIAFGSTIESWRPEMVPVSHNNLQSAWRWALNLRCRGSRNVLSALRKAVEVDFKDKDKHQSQGIYLFTGGIPDQDMPTLSAYMAEACGGCDLQLNVCLFYVGEPKMDTTPPARYASHTDTAAAYKEVTRAAGGRFHWFGDTGIYESDDINSIMSEMEKALNYSQKCAFLMASLKNHSGKVLGSSALPKEKPKTLQLRSQPKKLCPPRPTVPLGARMSIKDDPDREKSPPLKSLKWRPLSSRVGISPAAAQPTKEGMMELRRKTKSREAETSLLLFYTEKGNDVGSVYKKYPQGRGLRRTSSSIDLPRKDTVCSSQEWVAKYGLKKLKLEISRCMGPNCTHQKSGQRSASAKHCSIFPSVEIHGVVRHIQWTPREMEVYIRHLEKVLRRYVQRLQWLLSGSRRLFGTVLESKVCILLDTSGSMGPYLQQVKTELVLLIWEQLRKCCDSFNLLSFAESFQSWQDTLVETTDAACHEAMQWVTHLQAQGSTSILQALLKAFSFHDLEGLYLLTDGKPDTSCSLVLNEVQKLREKRDVKVHTISLNCSDRAAVEFLRKLASFTGGRYHCPVGEDTLSKIHSLLTKGFINEKDPTLPPFEGDDLRILAQEITKARSFLWQAQSFRSQLQKKNDAEPKVTLS.

Positions 1–24 (MKKYRKISIGCFAMATQTSHVFHG) are cleaved as a signal peptide. A disordered region spans residues 40–62 (GRDSKKPLKQKNMNGLGQNSDNG). Positions 50–62 (KNMNGLGQNSDNG) are enriched in polar residues. The stretch at 333–357 (TSRDMDELLAEIQKAQSLLSHVQAL) forms a coiled coil. In terms of domain architecture, VWFA 1 spans 511 to 708 (RVVVLLDISA…SIMSEMEKAL (198 aa)). An N-linked (GlcNAc...) asparagine glycan is attached at N709. Positions 729 to 780 (LGSSALPKEKPKTLQLRSQPKKLCPPRPTVPLGARMSIKDDPDREKSPPLKS) are disordered. The span at 765–776 (SIKDDPDREKSP) shows a compositional bias: basic and acidic residues. A VWFA 2 domain is found at 959–1131 (KVCILLDTSG…KIHSLLTKGF (173 aa)).

The protein resides in the secreted. The polypeptide is von Willebrand factor A domain-containing protein 3A (VWA3A) (Homo sapiens (Human)).